The sequence spans 623 residues: uncharacterized protein (623 aa).

Over residues 157–166 the composition is skewed to basic and acidic residues; sequence LNESPLRDQQ. Residues 157 to 237 are disordered; it reads LNESPLRDQQ…QGLPDHNNSI (81 aa). Residues 167–177 show a composition bias toward polar residues; it reads ESSTPSKNSTL. Low complexity predominate over residues 193-210; that stretch reads AFRPLPSPSRRSSQSAPA.

This is an uncharacterized protein from Macaca fascicularis (Crab-eating macaque).